Here is a 225-residue protein sequence, read N- to C-terminus: Sugar fermentation stimulation protein homolog (225 aa).

Belongs to the SfsA family.

The protein is Sugar fermentation stimulation protein homolog of Sulfolobus acidocaldarius (strain ATCC 33909 / DSM 639 / JCM 8929 / NBRC 15157 / NCIMB 11770).